Consider the following 736-residue polypeptide: Gephyrin (736 aa).

Residues 14–166 form an MPT Mo-transferase region; that stretch reads QIRVGVLTVS…FILPALPHAI (153 aa). The interaction with GABARAP stretch occupies residues 140–316; it reads LIINLPGSKK…VDITKVARRH (177 aa). 2 disordered regions span residues 181–232 and 260–290; these read DELE…DSSS and TASL…PKVQ. The segment covering 187–199 has biased composition (pro residues); it reads PSPPPPLSPPPTT. Residues Ser188 and Ser194 each carry the phosphoserine modification. A Phosphothreonine modification is found at Thr198. Ser200 carries the phosphoserine modification. Cys212 is lipidated: S-palmitoyl cysteine. Polar residues predominate over residues 261 to 290; the sequence is ASLSTTPSESPRAQATSRLSTASCPTPKVQ. Residue Ser262 is modified to Phosphoserine. A phosphothreonine mark is found at Thr265 and Thr266. Phosphoserine is present on residues Ser268 and Ser270. Cys284 carries the S-palmitoyl cysteine lipid modification. Ser305 carries the phosphoserine modification. Residues 326 to 736 are MPT adenylyltransferase; the sequence is MDKAFITVLE…VVDVMVIGRL (411 aa).

It in the N-terminal section; belongs to the MoaB/Mog family. In the C-terminal section; belongs to the MoeA family. As to quaternary structure, homotrimer, homodimer and homooligomer. Interacts with GABARAP. Interacts with SRGAP2 (via SH3 domain). Interacts with GABRA3. Interacts with GLRB. GABRA3 and GLRB occupy overlapping binding sites. Interacts with ARHGAP32; IQSEC3, INSYN1 and INSYN2A. Requires Mg(2+) as cofactor. Palmitoylated. Palmitoylation is stimulated by GABA type A receptors activity. Palmitoylation by ZDHHC12 regulates clustering at synapses.

Its subcellular location is the postsynaptic cell membrane. It is found in the cell membrane. The protein resides in the cytoplasm. The protein localises to the cytosol. It localises to the cytoskeleton. Its subcellular location is the cell projection. It is found in the dendrite. The protein resides in the postsynaptic density. It catalyses the reaction molybdopterin + ATP + H(+) = adenylyl-molybdopterin + diphosphate. It carries out the reaction adenylyl-molybdopterin + molybdate = Mo-molybdopterin + AMP + H(+). The protein operates within cofactor biosynthesis; molybdopterin biosynthesis. With respect to regulation, inhibited by copper and tungsten. Microtubule-associated protein involved in membrane protein-cytoskeleton interactions. It is thought to anchor the inhibitory glycine receptor (GLYR) to subsynaptic microtubules. Acts as a major instructive molecule at inhibitory synapses, where it also clusters GABA type A receptors. Functionally, also has a catalytic activity and catalyzes two steps in the biosynthesis of the molybdenum cofactor. In the first step, molybdopterin is adenylated. Subsequently, molybdate is inserted into adenylated molybdopterin and AMP is released. The protein is Gephyrin of Homo sapiens (Human).